The sequence spans 1083 residues: FACT complex subunit spt16 (1083 aa).

S437 carries the phosphoserine modification. The stretch at 466–504 (LESKLRNEINTEEKRKEHQRELAQQLNERAKDRLARQGN) forms a coiled coil. The disordered stretch occupies residues 923-1083 (FEQGGWTFLD…NGHKSKKSRH (161 aa)). Positions 935–987 (SGSEGENETAESEEDEAYNPTDAESDEESDEDSEYSEASEDSEESDEDLGSDE) are enriched in acidic residues. The span at 988–1023 (ESGKDWSDLEREAAEEDRNHDYAADDKPRNGKFDSK) shows a compositional bias: basic and acidic residues. Over residues 1024–1033 (KHGKSSKHSP) the composition is skewed to basic residues. A compositionally biased stretch (basic and acidic residues) spans 1058–1076 (SSKDKDRKRSRDDSRDNGH).

It belongs to the peptidase M24 family. SPT16 subfamily. As to quaternary structure, component of the FACT complex, a stable heterodimer of dre4/spt16 and Ssrp. Interacts with TRL/GAGA.

The protein localises to the nucleus. It is found in the chromosome. In terms of biological role, component of the FACT complex, a general chromatin factor that acts to reorganize nucleosomes. The FACT complex is involved in multiple processes that require DNA as a template such as mRNA elongation, DNA replication and DNA repair. During transcription elongation the FACT complex acts as a histone chaperone that both destabilizes and restores nucleosomal structure. It facilitates the passage of RNA polymerase II and transcription by promoting the dissociation of one histone H2A-H2B dimer from the nucleosome, then subsequently promotes the reestablishment of the nucleosome following the passage of RNA polymerase II. The FACT complex is required for expression of Hox genes. The sequence is that of FACT complex subunit spt16 (dre4) from Drosophila melanogaster (Fruit fly).